Consider the following 423-residue polypeptide: Vitamin D3 receptor (423 aa).

Residues Cys24, Cys27, Cys41, Cys44, Cys60, Cys66, Cys76, and Cys79 each coordinate Zn(2+). NR C4-type zinc fingers lie at residues 24 to 44 (CGVC…CEGC) and 60 to 84 (CPFN…LKRC). Positions 24-89 (CGVCGDRATG…RLKRCVDIGM (66 aa)) form a DNA-binding region, nuclear receptor. The segment at 97-126 (DEEVQRKREMIMKRKEEEALKDSLRPKLSE) is hinge. Residues 127–419 (EQQHIIAILL…LTPLVLEVFG (293 aa)) form the NR LBD domain. Tyr143 contacts calcitriol. The interval 159–180 (MDGSTGSYSPRPTLSFSGNSSS) is disordered. Residues 171 to 180 (TLSFSGNSSS) show a composition bias toward low complexity. Ser233 is a calcitriol binding site. The interaction with coactivator LXXLL motif stretch occupies residues 242–260 (KMIPGFRDLTSDDQIVLLK). The calcitriol site is built by Arg270, Ser274, His301, and His393. The 9aaTAD motif lies at 412–420 (PLVLEVFGN).

Belongs to the nuclear hormone receptor family. NR1 subfamily. As to quaternary structure, homodimer in the absence of bound vitamin D3. Heterodimer with RXRA after vitamin D3 binding. Interacts with MED1 and NCOA6. Interacts with MED1, NCOA1, NCOA2, NCOA3 and NCOA6 coactivators, leading to a strong increase of transcription of target genes. Interacts with the corepressor NCOR1. Interacts with SNW1. Interacts with IRX4, the interaction does not affect its transactivation activity. Interacts with CRY1. Interacts with CRY2 in a ligand-dependent manner. Ubiquitinated by UBR5, leading to its degradation: UBR5 specifically recognizes and binds ligand-bound VDR when it is not associated with coactivators (NCOAs). In presence of NCOAs, the UBR5-degron is not accessible, preventing its ubiquitination and degradation. As to expression, detected in intestine and kidney.

Its subcellular location is the nucleus. The protein resides in the cytoplasm. Its function is as follows. Nuclear receptor for calcitriol, the active form of vitamin D3 which mediates the action of this vitamin on cells. Enters the nucleus upon vitamin D3 binding where it forms heterodimers with the retinoid X receptor/RXR. The VDR-RXR heterodimers bind to specific response elements on DNA and activate the transcription of vitamin D3-responsive target genes. Plays a central role in calcium homeostasis. Also functions as a receptor for the secondary bile acid lithocholic acid (LCA) and its metabolites. This Rattus norvegicus (Rat) protein is Vitamin D3 receptor (Vdr).